Reading from the N-terminus, the 274-residue chain is UPF0758 protein RHE_CH01848 (274 aa).

The tract at residues 1-37 is disordered; sequence MAKGPVATSSDDELPFETEEPVADERSFFGGRPQKPA. Acidic residues predominate over residues 10–22; that stretch reads SDDELPFETEEPV. In terms of domain architecture, MPN spans 152-274; sequence VLSSWSSVIQ…HVSLKGLKLI (123 aa). Zn(2+) contacts are provided by His223, His225, and Asp236. A JAMM motif motif is present at residues 223–236; that stretch reads HNHPSGDPTPSRAD.

Belongs to the UPF0758 family.

The polypeptide is UPF0758 protein RHE_CH01848 (Rhizobium etli (strain ATCC 51251 / DSM 11541 / JCM 21823 / NBRC 15573 / CFN 42)).